A 185-amino-acid chain; its full sequence is Peptidyl-tRNA hydrolase (185 aa).

TRNA is bound at residue Tyr14. His19 functions as the Proton acceptor in the catalytic mechanism. Residues Tyr64, Asn66, and Asn112 each coordinate tRNA.

It belongs to the PTH family. As to quaternary structure, monomer.

It is found in the cytoplasm. It carries out the reaction an N-acyl-L-alpha-aminoacyl-tRNA + H2O = an N-acyl-L-amino acid + a tRNA + H(+). Functionally, hydrolyzes ribosome-free peptidyl-tRNAs (with 1 or more amino acids incorporated), which drop off the ribosome during protein synthesis, or as a result of ribosome stalling. In terms of biological role, catalyzes the release of premature peptidyl moieties from peptidyl-tRNA molecules trapped in stalled 50S ribosomal subunits, and thus maintains levels of free tRNAs and 50S ribosomes. This Pediococcus pentosaceus (strain ATCC 25745 / CCUG 21536 / LMG 10740 / 183-1w) protein is Peptidyl-tRNA hydrolase.